We begin with the raw amino-acid sequence, 1412 residues long: MESINVVNSVEDLPGFNPDENVEENMEVVESVKNDLEMSDDEELELSLDLTGDSMFTPPPSKRKREELSDSMKQRVNYYAIADMRMKDECLDYIKNSTYANEGWTEEMTKEFLINQSMTMKLYLETPCDADKLREYLHSSFSDSEVFGIINMANVGDAGTGKTRCMINFQSSMPGMCITGPENKTTIHYSEEYMNRNQPGCRRFEKSTCTWHKFLNLMFANTTMQIQLKKLQDDEELNKETESFVNDVSMLGSPEELRKRTRELTLLYMVKLRNIMTTVYDQMKYNFTKEKMEIYRPMYDNDSPMNQDDKMTFTWVNNDFSASLKRLNTAIAMAEQRLFGGAGQPSGEIKVSKTLEKILKKQISDLKEERRLLILRHALSKNIKTQEEYRNYVSFMTSEKRAKFAGGPDLPPMTVIYEIVMAEEDGKTPLYMKFLHSMISTVANMIYNPPYYKIRPPIYFTSGSDTQFGSISSTASPLSYILSPAIKSDEKHTMVWRGQLFRRGLDDMSSDIAKAHRVPCLRLENNLPLDESILKLWERHSTLLGDPDYHPESVRIFATHNSINQFTNKMKDSGRADLYVNDLAMISSNVVPLEGSILSSGGINSKNGINTIELSTKSETEAKKARCLAWKKKMVIYSNKIKKRVKNENKPEETKLEIKPRKVVVKGVPMDANRIIPSSEEYIDRRTGGGKECAEVNIGYTRYSEALDVEMAKTLERLNMDYKKDLAIAYGSKEAVEAEEKMLKENEDMDGLALLKTKNVNKRAKMVVESISSCKTGSRKRKHEDIVKEHEAEKRDSDDEDDFEEVDVEDTYSPTKNITTMMYITGPAKELLSKDEHIEHRMYAGNIEKKLGQGKTYAKQVFTSARATDHLGIFEYVPEGDMVTIYGNVDVKAYDKDDMATFYKSVEKNISGVVMHMTFKRPRAFTSNRKVDMIRNNMTLIPRGVESTPMMMRMDGAYNNGSIASMEMKFLVNMEIVFEFLKEKIMYHMQTLIHNKMDDGELTDIFNQLFEYDGSSEMKLVANGYREAMKHCKNENKKEKGKKMGVEDLYKDSICWINCIQMLDMNFFENRKLTIYLHKSPLYDIFKYASEKSVSISANDVTFKSTIIGNYRHEALFHVVDKAIGFKPDFKKNGCGFGYEFKEEDNLDQKDRHKGDHMAMEWAMKHVYPELFYSTSAVVKYGDVMIMSSEPKMENPINWTELFCSEERKQWGKHGGSNEAFGVLARRFQAPPSTPDTILFNQKYRLPIGEGVGFPRPFRQGAGPKNSGVILKSKNKVLYYASNAAEFTDMGYDKKQAKAESGYALGMVCPFTISEAFTFHHAQGSTLAGGVFIDLGKLKNGNGELIHGMGGTSSAVLVGITRPTEVSNVKLANVEEFKKAYDKEAQTKDWARTLAKKRIISSVSTRFEKFKS.

Residues 1-22 are disordered; that stretch reads MESINVVNSVEDLPGFNPDENV. 2 coiled-coil regions span residues 317–377 and 732–800; these read NNDF…ILRH and SKEA…SDDE. The tract at residues 778-808 is disordered; it reads SRKRKHEDIVKEHEAEKRDSDDEDDFEEVDV. Positions 783-797 are enriched in basic and acidic residues; it reads HEDIVKEHEAEKRDS. Over residues 798–808 the composition is skewed to acidic residues; that stretch reads DDEDDFEEVDV.

This is an uncharacterized protein from Magallana gigas (Pacific oyster).